The sequence spans 702 residues: Elongation factor G (702 aa).

The region spanning 8 to 290 (TRYRNIGISA…AVIEYLPAPT (283 aa)) is the tr-type G domain. GTP contacts are provided by residues 17-24 (AHIDAGKT), 88-92 (DTPGH), and 142-145 (NKMD).

Belongs to the TRAFAC class translation factor GTPase superfamily. Classic translation factor GTPase family. EF-G/EF-2 subfamily.

Its subcellular location is the cytoplasm. Its function is as follows. Catalyzes the GTP-dependent ribosomal translocation step during translation elongation. During this step, the ribosome changes from the pre-translocational (PRE) to the post-translocational (POST) state as the newly formed A-site-bound peptidyl-tRNA and P-site-bound deacylated tRNA move to the P and E sites, respectively. Catalyzes the coordinated movement of the two tRNA molecules, the mRNA and conformational changes in the ribosome. In Erwinia tasmaniensis (strain DSM 17950 / CFBP 7177 / CIP 109463 / NCPPB 4357 / Et1/99), this protein is Elongation factor G.